The sequence spans 327 residues: MRILVNGAGVAGLTVAWQLYRHGFRVTLAERAGTVGAGASGFAGGMLAPWCERESAEEPVLTLGRLAADWWEAALPGHVHRRGTLVVAGGRDTGELDRFSRRTSGWEWLDEVAIAALEPDLAGRFRRALFFRQEAHLDPRQALAALAAGLEDARMRLTLGVVGESDVDHDRVVDCTGAAQIGRLPGLRGVRGEMLCVETTEVSLSRPVRLLHPRHPIYIVPRDKNRFMVGATMIESDDGGPITARSLMELLNAAYAMHPAFGEARVTETGAGVRPAYPDNLPRVTQEGRTLHVNGLYRHGFLLAPAMAGEVARRLLTEQGQPERRAS.

The protein operates within cofactor biosynthesis; thiamine diphosphate biosynthesis. May have amino acid oxidase activity in the biosynthesis of thiazole when cysteine gives its thiol group to be inserted into the thiazole molecule and the rest of the molecule is deaminated to give pyruvic acid and ammonia. This is Putative thiamine biosynthesis oxidoreductase ThiO (thiO) from Rhizobium etli (strain ATCC 51251 / DSM 11541 / JCM 21823 / NBRC 15573 / CFN 42).